Consider the following 406-residue polypeptide: Tryptophan 2,3-dioxygenase (406 aa).

Residues 72-76 and arginine 144 each bind substrate; that span reads FIVTH. Histidine 328 contacts heme. Residue threonine 342 coordinates substrate.

Belongs to the tryptophan 2,3-dioxygenase family. As to quaternary structure, homotetramer. Dimer of dimers. Heme serves as cofactor.

The enzyme catalyses L-tryptophan + O2 = N-formyl-L-kynurenine. It participates in amino-acid degradation; L-tryptophan degradation via kynurenine pathway; L-kynurenine from L-tryptophan: step 1/2. In terms of biological role, heme-dependent dioxygenase that catalyzes the oxidative cleavage of the L-tryptophan (L-Trp) pyrrole ring and converts L-tryptophan to N-formyl-L-kynurenine. Catalyzes the oxidative cleavage of the indole moiety. The chain is Tryptophan 2,3-dioxygenase from Xenopus laevis (African clawed frog).